The following is a 468-amino-acid chain: Uronate isomerase (468 aa).

It belongs to the metallo-dependent hydrolases superfamily. Uronate isomerase family.

The catalysed reaction is D-glucuronate = D-fructuronate. It carries out the reaction aldehydo-D-galacturonate = keto-D-tagaturonate. It functions in the pathway carbohydrate metabolism; pentose and glucuronate interconversion. The polypeptide is Uronate isomerase (Bacteroides fragilis (strain ATCC 25285 / DSM 2151 / CCUG 4856 / JCM 11019 / LMG 10263 / NCTC 9343 / Onslow / VPI 2553 / EN-2)).